A 161-amino-acid polypeptide reads, in one-letter code: Nucleotide-binding protein Pfl01_4421 (161 aa).

This sequence belongs to the YajQ family.

Its function is as follows. Nucleotide-binding protein. The protein is Nucleotide-binding protein Pfl01_4421 of Pseudomonas fluorescens (strain Pf0-1).